We begin with the raw amino-acid sequence, 100 residues long: Probable DNA-binding protein HU (100 aa).

It belongs to the bacterial histone-like protein family.

Functionally, histone-like DNA-binding protein which is capable of wrapping DNA to stabilize it, and thus to prevent its denaturation under extreme environmental conditions. This is Probable DNA-binding protein HU (hup) from Chlamydia muridarum (strain MoPn / Nigg).